The following is a 346-amino-acid chain: D-alanine--D-alanine ligase (346 aa).

Residues 133–327 enclose the ATP-grasp domain; that stretch reads KLYAKSVGVK…TLADQIPLEK (195 aa). Residue 159–211 coordinates ATP; the sequence is LRFPCIIKPARLGSSIGISIVKDEKDLEYAKDVGFEFDNDLVVEEFKNNIKEY. Residues D284, E296, and N298 each coordinate Mg(2+).

Belongs to the D-alanine--D-alanine ligase family. Requires Mg(2+) as cofactor. Mn(2+) is required as a cofactor.

Its subcellular location is the cytoplasm. The enzyme catalyses 2 D-alanine + ATP = D-alanyl-D-alanine + ADP + phosphate + H(+). Its pathway is cell wall biogenesis; peptidoglycan biosynthesis. In terms of biological role, cell wall formation. This Campylobacter jejuni subsp. doylei (strain ATCC BAA-1458 / RM4099 / 269.97) protein is D-alanine--D-alanine ligase.